The chain runs to 880 residues: Chaperone protein ClpB 1 (880 aa).

A Clp R domain is found at 6–148; it reads PNKFTDKAWE…EASIKAVRGS (143 aa). Repeat regions lie at residues 9-74 and 85-148; these read FTDK…TQRQ and LGRS…VRGS. The tract at residues 161 to 343 is NBD1; the sequence is EALQKFGRDL…RRFQQVYVDQ (183 aa). ATP is bound at residue 208–215; that stretch reads GEPGVGKT. A linker region spans residues 344-554; the sequence is PSVENTISIL…IAEIVAKWTG (211 aa). Residues 394–530 are a coiled coil; that stretch reads IDLVDEAAAQ…KEAKLLELQS (137 aa). The NBD2 stretch occupies residues 564-775; sequence ERQKLLQLES…RVDDTILFHA (212 aa). ATP is bound at residue 614–621; it reads GPTGVGKT. The segment at 776–880 is C-terminal; that stretch reads LSRSEMSHII…VKVSVTQITT (105 aa).

This sequence belongs to the ClpA/ClpB family. As to quaternary structure, homohexamer. The oligomerization is ATP-dependent.

It is found in the cytoplasm. Part of a stress-induced multi-chaperone system, it is involved in the recovery of the cell from heat-induced damage, in cooperation with DnaK, DnaJ and GrpE. Acts before DnaK, in the processing of protein aggregates. Protein binding stimulates the ATPase activity; ATP hydrolysis unfolds the denatured protein aggregates, which probably helps expose new hydrophobic binding sites on the surface of ClpB-bound aggregates, contributing to the solubilization and refolding of denatured protein aggregates by DnaK. The sequence is that of Chaperone protein ClpB 1 (clpB1) from Nostoc sp. (strain PCC 7120 / SAG 25.82 / UTEX 2576).